A 494-amino-acid polypeptide reads, in one-letter code: Ribose import ATP-binding protein RbsA (494 aa).

2 consecutive ABC transporter domains span residues Ile-2 to Gln-239 and Ile-251 to Asn-493. Residue Gly-34–Ser-41 participates in ATP binding.

It belongs to the ABC transporter superfamily. Ribose importer (TC 3.A.1.2.1) family. In terms of assembly, the complex is composed of an ATP-binding protein (RbsA), two transmembrane proteins (RbsC) and a solute-binding protein (RbsB).

It localises to the cell membrane. It carries out the reaction D-ribose(out) + ATP + H2O = D-ribose(in) + ADP + phosphate + H(+). Part of the ABC transporter complex RbsABC involved in ribose import. Responsible for energy coupling to the transport system. This chain is Ribose import ATP-binding protein RbsA, found in Geobacillus kaustophilus (strain HTA426).